The sequence spans 940 residues: DNA gyrase subunit A (940 aa).

The tract at residues 1–22 is disordered; the sequence is MSDHTNPPSAPPDDDPNGGSLL. Positions 48–538 constitute a Topo IIA-type catalytic domain; sequence LPDARDGLKP…SLADQDDESL (491 aa). The O-(5'-phospho-DNA)-tyrosine intermediate role is filled by Tyr-136. The GyrA-box motif lies at 565-571; sequence QHRGGRG. A compositionally biased stretch (acidic residues) spans 914–924; that stretch reads ESVDDNGDDAD. The disordered stretch occupies residues 914–940; sequence ESVDDNGDDADSVAPAAPDGQVTDSDD.

This sequence belongs to the type II topoisomerase GyrA/ParC subunit family. In terms of assembly, heterotetramer, composed of two GyrA and two GyrB chains. In the heterotetramer, GyrA contains the active site tyrosine that forms a transient covalent intermediate with DNA, while GyrB binds cofactors and catalyzes ATP hydrolysis.

Its subcellular location is the cytoplasm. It catalyses the reaction ATP-dependent breakage, passage and rejoining of double-stranded DNA.. Its function is as follows. A type II topoisomerase that negatively supercoils closed circular double-stranded (ds) DNA in an ATP-dependent manner to modulate DNA topology and maintain chromosomes in an underwound state. Negative supercoiling favors strand separation, and DNA replication, transcription, recombination and repair, all of which involve strand separation. Also able to catalyze the interconversion of other topological isomers of dsDNA rings, including catenanes and knotted rings. Type II topoisomerases break and join 2 DNA strands simultaneously in an ATP-dependent manner. In Granulibacter bethesdensis (strain ATCC BAA-1260 / CGDNIH1), this protein is DNA gyrase subunit A.